The sequence spans 61 residues: Small ribosomal subunit protein uS14 (61 aa).

Zn(2+)-binding residues include cysteine 24, cysteine 27, cysteine 40, and cysteine 43.

Belongs to the universal ribosomal protein uS14 family. Zinc-binding uS14 subfamily. In terms of assembly, part of the 30S ribosomal subunit. Contacts proteins S3 and S10. Requires Zn(2+) as cofactor.

Functionally, binds 16S rRNA, required for the assembly of 30S particles and may also be responsible for determining the conformation of the 16S rRNA at the A site. This Geobacter sp. (strain M21) protein is Small ribosomal subunit protein uS14.